The chain runs to 248 residues: MSYDRAITVFSPDGHLFQVEYAQEAVKKGSTAVGVRGKDIVVLGVEKKSVAKLQDERTVRKICALDDNVCMAFAGLTADARIVINRARVECQSHRLTVEDPVTVEYITRYIASLKQRYTQSNGRRPFGISALIVGFDFDGTPRLYQTDPSGTYHAWKANAIGRGAKSVREFLEKNYTDDAIETDDLTIKLVIKALLEVVQSGGKNIELAVMRRDQPLKILNPEEIEKYVAEIEKEKEENEKKKQKKAS.

Ser130 carries O-linked (GlcNAc) serine glycosylation. Tyr153 carries the post-translational modification Phosphotyrosine; by ABL1 and ABL2. Lys227 is subject to N6-acetyllysine.

Belongs to the peptidase T1A family. As to quaternary structure, the 26S proteasome consists of a 20S proteasome core and two 19S regulatory subunits. The 20S proteasome core is a barrel-shaped complex made of 28 subunits that are arranged in four stacked rings. The two outer rings are each formed by seven alpha subunits, and the two inner rings are formed by seven beta subunits. The proteolytic activity is exerted by three beta-subunits PSMB5, PSMB6 and PSMB7. PSMA7 interacts directly with the PSMG1-PSMG2 heterodimer which promotes 20S proteasome assembly. Interacts with HIF1A. Interacts with RAB7A. Interacts with PRKN. Interacts with ABL1 and ABL2. Interacts with EMAP2. Interacts with MAVS. Post-translationally, phosphorylation by ABL1 or ABL2 leads to an inhibition of proteasomal activity and cell cycle transition blocks. In terms of tissue distribution, detected in liver (at protein level).

Its subcellular location is the cytoplasm. The protein localises to the nucleus. Functionally, component of the 20S core proteasome complex involved in the proteolytic degradation of most intracellular proteins. This complex plays numerous essential roles within the cell by associating with different regulatory particles. Associated with two 19S regulatory particles, forms the 26S proteasome and thus participates in the ATP-dependent degradation of ubiquitinated proteins. The 26S proteasome plays a key role in the maintenance of protein homeostasis by removing misfolded or damaged proteins that could impair cellular functions, and by removing proteins whose functions are no longer required. Associated with the PA200 or PA28, the 20S proteasome mediates ubiquitin-independent protein degradation. This type of proteolysis is required in several pathways including spermatogenesis (20S-PA200 complex) or generation of a subset of MHC class I-presented antigenic peptides (20S-PA28 complex). The protein is Proteasome subunit alpha type-7 (Psma7) of Mus musculus (Mouse).